The chain runs to 181 residues: Ribonuclease HII (181 aa).

Residues 1–181 (MICGIDEVGR…SLHRKNFKLI (181 aa)) form the RNase H type-2 domain. A divalent metal cation-binding residues include D6, E7, and D98.

Belongs to the RNase HII family. Mn(2+) serves as cofactor. The cofactor is Mg(2+).

Its subcellular location is the cytoplasm. The catalysed reaction is Endonucleolytic cleavage to 5'-phosphomonoester.. Endonuclease that specifically degrades the RNA of RNA-DNA hybrids. This Borreliella burgdorferi (strain ZS7) (Borrelia burgdorferi) protein is Ribonuclease HII.